Consider the following 245-residue polypeptide: 8-amino-3,8-dideoxy-manno-octulosonate cytidylyltransferase (245 aa).

The protein belongs to the KdsB family.

The protein resides in the cytoplasm. The catalysed reaction is 8-amino-3,8-dideoxy-alpha-D-manno-octulosonate + CTP = CMP-8-amino-3,8-dideoxy-alpha-D-manno-oct-2-ulosonate + diphosphate. It participates in bacterial outer membrane biogenesis; lipopolysaccharide biosynthesis. Functionally, activates KDO8N (a required 8-carbon sugar) for incorporation into bacterial lipopolysaccharide in the Shewanella genus. In Shewanella frigidimarina (strain NCIMB 400), this protein is 8-amino-3,8-dideoxy-manno-octulosonate cytidylyltransferase.